A 1857-amino-acid polypeptide reads, in one-letter code: Chitin synthase Y (1857 aa).

The tract at residues methionine 1–proline 22 is disordered. The region spanning methionine 1–glutamate 788 is the Myosin motor domain. Glycine 102 to threonine 109 serves as a coordination point for ATP. A disordered region spans residues serine 601 to serine 653. The N-linked (GlcNAc...) asparagine glycan is linked to asparagine 634. The tract at residues leucine 668 to aspartate 692 is actin-binding. Helical transmembrane passes span tryptophan 898–glycine 918 and leucine 937–valine 957. One can recognise a Cytochrome b5 heme-binding domain in the interval glutamine 961 to phenylalanine 1020. 2 N-linked (GlcNAc...) asparagine glycosylation sites follow: asparagine 1047 and asparagine 1072. A helical membrane pass occupies residues phenylalanine 1209–leucine 1229. N-linked (GlcNAc...) asparagine glycosylation occurs at asparagine 1572. A run of 3 helical transmembrane segments spans residues leucine 1603–leucine 1623, isoleucine 1630–isoleucine 1650, and methionine 1657–phenylalanine 1677. The 56-residue stretch at leucine 1799 to serine 1854 folds into the DEK-C domain.

It in the N-terminal section; belongs to the TRAFAC class myosin-kinesin ATPase superfamily. Myosin family. The protein in the C-terminal section; belongs to the chitin synthase family. Class V subfamily.

The protein resides in the cell membrane. It localises to the cell septum. It is found in the cell tip. It carries out the reaction [(1-&gt;4)-N-acetyl-beta-D-glucosaminyl](n) + UDP-N-acetyl-alpha-D-glucosamine = [(1-&gt;4)-N-acetyl-beta-D-glucosaminyl](n+1) + UDP + H(+). Polymerizes chitin, a structural polymer of the cell wall and septum, by transferring the sugar moiety of UDP-GlcNAc to the non-reducing end of the growing chitin polymer. Specifically involved in hyphal elongation and new cell wall formation. This is Chitin synthase Y from Aspergillus oryzae (strain ATCC 42149 / RIB 40) (Yellow koji mold).